The primary structure comprises 312 residues: Apolipoprotein E (312 aa).

The N-terminal stretch at 1 to 18 is a signal peptide; sequence MKALWAVLLVTLLAGCLA. 8 repeat units span residues 72–93, 94–115, 116–137, 138–159, 160–181, 182–203, 204–225, and 226–247. The tract at residues 72 to 247 is 8 X 22 AA approximate tandem repeats; sequence VLMEDTMTEV…RLEEVREHME (176 aa). M135 carries the post-translational modification Methionine sulfoxide. A Phosphoserine modification is found at S139. The segment at 150 to 160 is LDL and other lipoprotein receptors binding; the sequence is HLRKMRKRLMR. 154–157 lines the heparin pocket; sequence MRKR. The lipid-binding and lipoprotein association stretch occupies residues 202-282; sequence TANLGAGAAQ…GWFEPIVEDM (81 aa). 221-228 contributes to the heparin binding site; that stretch reads GDRIRGRL. The segment at 258 to 312 is homooligomerization; sequence QQIRLQAEIFQARLKGWFEPIVEDMHRQWANLMEKIQASVATNPIISTPMPQENQ. The segment at 270-282 is specificity for association with VLDL; sequence RLKGWFEPIVEDM.

Belongs to the apolipoprotein A1/A4/E family. As to quaternary structure, homotetramer. May interact with ABCA1; functionally associated with ABCA1 in the biogenesis of HDLs. May interact with APP/A4 amyloid-beta peptide; the interaction is extremely stable in vitro but its physiological significance is unclear. May interact with MAPT. May interact with MAP2. In the cerebrospinal fluid, interacts with secreted SORL1. Interacts with PMEL; this allows the loading of PMEL luminal fragment on ILVs to induce fibril nucleation. In terms of processing, APOE exists as multiple glycosylated and sialylated glycoforms within cells and in plasma. The extent of glycosylation and sialylation are tissue and context specific. Glycated in plasma VLDL. Post-translationally, phosphorylated by FAM20C in the extracellular medium.

The protein resides in the secreted. It localises to the extracellular space. The protein localises to the extracellular matrix. Its subcellular location is the extracellular vesicle. It is found in the endosome. The protein resides in the multivesicular body. Its function is as follows. APOE is an apolipoprotein, a protein associating with lipid particles, that mainly functions in lipoprotein-mediated lipid transport between organs via the plasma and interstitial fluids. APOE is a core component of plasma lipoproteins and is involved in their production, conversion and clearance. Apolipoproteins are amphipathic molecules that interact both with lipids of the lipoprotein particle core and the aqueous environment of the plasma. As such, APOE associates with chylomicrons, chylomicron remnants, very low density lipoproteins (VLDL) and intermediate density lipoproteins (IDL) but shows a preferential binding to high-density lipoproteins (HDL). It also binds a wide range of cellular receptors including the LDL receptor/LDLR, the LDL receptor-related proteins LRP1, LRP2 and LRP8 and the very low-density lipoprotein receptor/VLDLR that mediate the cellular uptake of the APOE-containing lipoprotein particles. Finally, APOE also has a heparin-binding activity and binds heparan-sulfate proteoglycans on the surface of cells, a property that supports the capture and the receptor-mediated uptake of APOE-containing lipoproteins by cells. A main function of APOE is to mediate lipoprotein clearance through the uptake of chylomicrons, VLDLs, and HDLs by hepatocytes. APOE is also involved in the biosynthesis by the liver of VLDLs as well as their uptake by peripheral tissues ensuring the delivery of triglycerides and energy storage in muscle, heart and adipose tissues. By participating in the lipoprotein-mediated distribution of lipids among tissues, APOE plays a critical role in plasma and tissues lipid homeostasis. APOE is also involved in two steps of reverse cholesterol transport, the HDLs-mediated transport of cholesterol from peripheral tissues to the liver, and thereby plays an important role in cholesterol homeostasis. First, it is functionally associated with ABCA1 in the biogenesis of HDLs in tissues. Second, it is enriched in circulating HDLs and mediates their uptake by hepatocytes. APOE also plays an important role in lipid transport in the central nervous system, regulating neuron survival and sprouting. The polypeptide is Apolipoprotein E (Apoe) (Mus pahari (Gairdner's shrew-mouse)).